Consider the following 597-residue polypeptide: Arginine--tRNA ligase (597 aa).

A 'HIGH' region motif is present at residues 125–135; it reads PNTNKPLHLGH.

This sequence belongs to the class-I aminoacyl-tRNA synthetase family. Monomer.

The protein localises to the cytoplasm. The catalysed reaction is tRNA(Arg) + L-arginine + ATP = L-arginyl-tRNA(Arg) + AMP + diphosphate. The chain is Arginine--tRNA ligase from Parabacteroides distasonis (strain ATCC 8503 / DSM 20701 / CIP 104284 / JCM 5825 / NCTC 11152).